A 32-amino-acid polypeptide reads, in one-letter code: MSDIN-like toxin proprotein 1 (32 aa).

A propeptide spanning residues 1–10 (MSDINATCLP) is cleaved from the precursor. The cyclopeptide (Ala-Pro) cross-link spans 11–17 (AWLALCP). Positions 18–32 (CVGDDVNPTLTRGGT) are excised as a propeptide.

Belongs to the MSDIN fungal toxin family. In terms of processing, processed by the macrocyclase-peptidase enzyme POPB to yield a toxic cyclic heptapeptide. POPB first removes 10 residues from the N-terminus. Conformational trapping of the remaining peptide forces the enzyme to release this intermediate rather than proceed to macrocyclization. The enzyme rebinds the remaining peptide in a different conformation and catalyzes macrocyclization of the N-terminal 7 residues.

In terms of biological role, probable toxin that belongs to the MSDIN-like toxin family responsible for a large number of food poisoning cases and deaths. This chain is MSDIN-like toxin proprotein 1, found in Amanita fuligineoides.